Reading from the N-terminus, the 175-residue chain is Large ribosomal subunit protein uL10 (175 aa).

Belongs to the universal ribosomal protein uL10 family. In terms of assembly, part of the ribosomal stalk of the 50S ribosomal subunit. The N-terminus interacts with L11 and the large rRNA to form the base of the stalk. The C-terminus forms an elongated spine to which L12 dimers bind in a sequential fashion forming a multimeric L10(L12)X complex.

Its function is as follows. Forms part of the ribosomal stalk, playing a central role in the interaction of the ribosome with GTP-bound translation factors. In Xylella fastidiosa (strain M23), this protein is Large ribosomal subunit protein uL10.